The primary structure comprises 1254 residues: Structural polyprotein (1254 aa).

The host transcription inhibition stretch occupies residues 43-77 (LQAQQMQQLISAVSALTTKQNVKAPKGQRQKKQQK). The disordered stretch occupies residues 60–113 (TKQNVKAPKGQRQKKQQKPKEKKENQKKKPTQKKKQQQKPKPQAKKKKPGRRER). A Nuclear localization signal motif is present at residues 70–108 (QRQKKQQKPKEKKENQKKKPTQKKKQQQKPKPQAKKKKP). A compositionally biased stretch (basic residues) spans 84–110 (NQKKKPTQKKKQQQKPKPQAKKKKPGR). A binding to the viral RNA region spans residues 95–123 (QQQKPKPQAKKKKPGRRERMCMKIENDCI). The tract at residues 108 to 122 (PGRRERMCMKIENDC) is ribosome-binding. Cys-122 and Cys-137 are oxidised to a cystine. Positions 122–270 (CIFEVKLDGK…RVTPEGTEEW (149 aa)) constitute a Peptidase S3 domain. His-148 serves as the catalytic Charge relay system. Positions 153 to 163 (IDNPDLAKLTY) match the Nuclear export signal motif. The tract at residues 164–169 (KKSSKY) is interaction with spike glycoprotein E2. Residue Asp-170 is the Charge relay system of the active site. The interval 192-202 (PEGHYNWHHGA) is dimerization of the capsid protein. The active-site Charge relay system is Ser-222. The dimerization of the capsid protein stretch occupies residues 228 to 232 (DNKGR). The interval 271 to 282 (SAALMMCILANT) is functions as an uncleaved signal peptide for the precursor of protein E3/E2. Topologically, residues 271–694 (SAALMMCILA…PHEIIQYYYG (424 aa)) are extracellular. 3 disulfide bridges follow: Cys-277–Cys-286, Cys-291–Cys-295, and Cys-294–Cys-326. Asn-281 is a glycosylation site (N-linked (GlcNAc...) asparagine; by host). A glycan (N-linked (GlcNAc...) asparagine; by host) is linked at Asn-328. Cystine bridges form between Cys-353-Cys-459, Cys-356-Cys-362, Cys-425-Cys-439, Cys-487-Cys-599, Cys-535-Cys-559, and Cys-537-Cys-554. Interaction with host Mxra8 receptor stretches follow at residues 360–363 (YFCY) and 396–398 (HAH). The interval 518–521 (TAGN) is interaction with host Mxra8 receptor. Residue Asn-534 is glycosylated (N-linked (GlcNAc...) asparagine; by host). Positions 550 to 556 (TINTCKI) are interaction with host Mxra8 receptor. Asn-596 is a glycosylation site (N-linked (GlcNAc...) asparagine; by host). A helical transmembrane segment spans residues 695-715 (LYPAATIAAVSGASLMALLTL). Residues 716 to 756 (AATCCMLATARRKCLTPYALTPGAVVPLTLGLLCCAPRANA) lie on the Cytoplasmic side of the membrane. Cys-719 carries the S-palmitoyl cysteine; by host lipid modification. The segment at 724–728 (TARRK) is interaction with the capsid protein. 3 S-palmitoyl cysteine; by host lipidation sites follow: Cys-729, Cys-749, and Cys-750. The tract at residues 729 to 749 (CLTPYALTPGAVVPLTLGLLC) is transient transmembrane before p62-6K protein processing. A disulfide bridge connects residues Cys-729 and Cys-750. At 757–771 (ASFAETMAYLWDENK) the chain is on the extracellular side. A helical transmembrane segment spans residues 772–792 (TLFWMEFAAPAAALALLACCI). A topological domain (cytoplasmic) is located at residue Lys-793. The helical transmembrane segment at 794–814 (SLICCCKPFSFLVLLSLGASA) threads the bilayer. Over 815-1231 (KAYEHTATIP…AMTWVQRLAS (417 aa)) the chain is Extracellular. 4 cysteine pairs are disulfide-bonded: Cys-865–Cys-930, Cys-878–Cys-910, Cys-879–Cys-912, and Cys-884–Cys-894. Residues 900-917 (VYPFMWGGAYCFCDSENT) form an E1 fusion peptide loop region. The N-linked (GlcNAc...) asparagine; by host glycan is linked to Asn-957. Intrachain disulfides connect Cys-1075–Cys-1087, Cys-1117–Cys-1192, Cys-1122–Cys-1196, and Cys-1144–Cys-1186. The chain crosses the membrane as a helical span at residues 1232–1252 (GLGGLALIAVVVLVLVTCITM). Cys-1249 is lipidated: S-palmitoyl cysteine; by host. A lipid anchor (S-stearoyl cysteine; by host) is attached at Cys-1249. Over 1253 to 1254 (RR) the chain is Cytoplasmic.

As to quaternary structure, homodimer. Homomultimer. Interacts with host karyopherin KPNA4; this interaction allows the nuclear import of the viral capsid protein. Interacts with spike glycoprotein E2. Interacts with host IRAK1; the interaction leads to inhibition of IRAK1-dependent signaling. In terms of assembly, the precursor of protein E3/E2 and E1 form a heterodimer shortly after synthesis. Interacts with spike glycoprotein E2. The precursor of protein E3/E2 and E1 form a heterodimer shortly after synthesis. Processing of the precursor of protein E3/E2 into E2 and E3 results in a heterodimer of the spike glycoproteins E2 and E1. Spike at virion surface are constituted of a trimer of E2-E1 heterodimers. After target cell attachment and endocytosis, E1 change conformation to form homotrimers. Interacts with 6K protein. E1/E2 heterodimer interacts with host LDLR. As to quaternary structure, interacts with spike glycoprotein E1. Processing of the precursor of protein E3/E2 into E2 and E3 results in a heterodimer of the spike glycoproteins E2 and E1. Spike at virion surface are constituted of a trimer of E2-E1 heterodimers. Interacts with 6K protein. Interacts with host MXRA8; this interaction mediates virus entry. In terms of assembly, oligomer. Interacts with spike glycoprotein E1. Interacts with spike glycoprotein E2. Structural polyprotein: Specific enzymatic cleavages in vivo yield mature proteins. Capsid protein is auto-cleaved during polyprotein translation, unmasking a signal peptide at the N-terminus of the precursor of E3/E2. The remaining polyprotein is then targeted to the host endoplasmic reticulum, where host signal peptidase cleaves it into pE2, 6K and E1 proteins. pE2 is further processed to mature E3 and E2 by host furin in trans-Golgi vesicle. In terms of processing, palmitoylated via thioester bonds. These palmitoylations may induce disruption of the C-terminus transmembrane. This would result in the reorientation of E2 C-terminus from lumenal to cytoplasmic side. Post-translationally, N-glycosylated. Palmitoylated via thioester bonds.

It localises to the virion. It is found in the host cytoplasm. The protein resides in the host cell membrane. Its subcellular location is the host nucleus. The protein localises to the virion membrane. It localises to the host Golgi apparatus. It is found in the host trans-Golgi network. The protein resides in the host endoplasmic reticulum. It catalyses the reaction Autocatalytic release of the core protein from the N-terminus of the togavirus structural polyprotein by hydrolysis of a -Trp-|-Ser- bond.. Forms an icosahedral capsid with a T=4 symmetry composed of 240 copies of the capsid protein surrounded by a lipid membrane through which penetrate 80 spikes composed of trimers of E1-E2 heterodimers. The capsid protein binds to the viral RNA genome at a site adjacent to a ribosome binding site for viral genome translation following genome release. Possesses a protease activity that results in its autocatalytic cleavage from the nascent structural protein. Following its self-cleavage, the capsid protein transiently associates with ribosomes, and within several minutes the protein binds to viral RNA and rapidly assembles into icosahedric core particles. The resulting nucleocapsid eventually associates with the cytoplasmic domain of the spike glycoprotein E2 at the cell membrane, leading to budding and formation of mature virions. In case of infection, new virions attach to target cells and after clathrin-mediated endocytosis their membrane fuses with the host endosomal membrane. This leads to the release of the nucleocapsid into the cytoplasm, followed by an uncoating event necessary for the genomic RNA to become accessible. The uncoating might be triggered by the interaction of capsid proteins with ribosomes. Binding of ribosomes would release the genomic RNA since the same region is genomic RNA-binding and ribosome-binding. Specifically inhibits interleukin-1 receptor-associated kinase 1/IRAK1-dependent signaling during viral entry, representing a means by which the alphaviruses may evade innate immune detection and activation prior to viral gene expression. Functionally, provides the signal sequence for the translocation of the precursor of protein E3/E2 to the host endoplasmic reticulum. Furin-cleaved E3 remains associated with spike glycoprotein E1 and mediates pH protection of the latter during the transport via the secretory pathway. After virion release from the host cell, the assembly protein E3 is gradually released in the extracellular space. Its function is as follows. Plays a role in viral attachment to target host cell, by binding to the cell receptor MXRA8. The host LDLR may also act as a cell receptor for viral entry. Synthesized as a p62 precursor which is processed by furin at the cell membrane just before virion budding, giving rise to E2-E1 heterodimer. The p62-E1 heterodimer is stable, whereas E2-E1 is unstable and dissociate at low pH. p62 is processed at the last step, presumably to avoid E1 fusion activation before its final export to cell surface. E2 C-terminus contains a transitory transmembrane that would be disrupted by palmitoylation, resulting in reorientation of the C-terminal tail from lumenal to cytoplasmic side. This step is critical since E2 C-terminus is involved in budding by interacting with capsid proteins. This release of E2 C-terminus in cytoplasm occurs lately in protein export, and precludes premature assembly of particles at the endoplasmic reticulum membrane. In terms of biological role, acts as a viroporin that participates in virus glycoprotein processing and transport to the plasma membrane, cell permeabilization and budding of viral particles. The cation channel is permeable to Na(+)&gt;K(+)&gt;Ca(2+) in vitro. Disrupts the calcium homeostasis of the cell, probably at the endoplasmic reticulum level. This leads to cytoplasmic calcium elevation. Because of its lipophilic properties, the 6K protein is postulated to influence the selection of lipids that interact with the transmembrane domains of the glycoproteins, which, in turn, affects the deformability of the bilayer required for the extreme curvature that occurs as budding proceeds. Present in low amount in virions, about 3% compared to viral glycoproteins. Class II viral fusion protein. Fusion activity is inactive as long as E1 is bound to E2 in mature virion. After virus attachment to target cell via host MXRA8 and endocytosis, acidification of the endosome induce dissociation of E1/E2 heterodimer and concomitant trimerization of the E1 subunits. This E1 trimer is fusion active, and promotes release of viral nucleocapsid in cytoplasm after endosome and viral membrane fusion. Efficient fusion requires the presence of cholesterol and sphingolipid in the target membrane. This Aedes (Common banded mosquito) protein is Structural polyprotein.